The chain runs to 370 residues: Elongation factor Ts, mitochondrial (370 aa).

A mitochondrion-targeting transit peptide spans 1-29; it reads MALLSAAPRALRLPRRLPLGAALPALRAL.

This sequence belongs to the EF-Ts family.

The protein localises to the mitochondrion. In terms of biological role, associates with the EF-Tu.GDP complex and induces the exchange of GDP to GTP. It remains bound to the aminoacyl-tRNA.EF-Tu.GTP complex up to the GTP hydrolysis stage on the ribosome. The chain is Elongation factor Ts, mitochondrial from Cryptococcus neoformans var. neoformans serotype D (strain B-3501A) (Filobasidiella neoformans).